The primary structure comprises 363 residues: Guanine nucleotide-binding protein alpha-11 subunit (363 aa).

In terms of domain architecture, G-alpha spans 26–363 (KMLKILLLGG…KISMEKVGFM (338 aa)). Positions 29 to 42 (KILLLGGPECGKST) are G1 motif. GTP-binding positions include 34–41 (GGPECGKS), 172–178 (LRARVPT), 197–201 (DVGGQ), 276–279 (NKID), and alanine 335. Residues serine 41 and threonine 178 each contribute to the Mg(2+) site. The tract at residues 170–178 (DVLRARVPT) is G2 motif. Residues 193–202 (LRMVDVGGQR) form a G3 motif region. Residues 272 to 279 (ILFLNKID) form a G4 motif region. A G5 motif region spans residues 333 to 338 (TNATDT).

The protein belongs to the G-alpha family. In terms of assembly, g proteins are composed of 3 units; alpha, beta and gamma. The alpha chain contains the guanine nucleotide binding site. As to expression, expressed in ADL and ASH neurons.

Functionally, guanine nucleotide-binding proteins (G proteins) are involved as modulators or transducers in various transmembrane signaling systems. Mediates the transduction of food and serotonin signals, which modulates the avoidance response to the odorant octanol. Has a role in lifespan to promote longevity. The protein is Guanine nucleotide-binding protein alpha-11 subunit (gpa-11) of Caenorhabditis elegans.